Reading from the N-terminus, the 464-residue chain is MNHSKKVLNVFSLVMINVIAVDSLRTLPISAKLGFSLVFYYIFAALTFFIPVALVAAELATAYPNTGGIYVWVREAFGRRAGFITIWLQWIYNVVWYPTMLAFIAATLSYLIAPHLGNNKFYLLGTALTLFWVFTFLNCFGMKLSSIVSIIGASIGTLLPMIVIIVLGAVWIFQDRPVAVNYPTTWLPDFSSLGNLSLFSAVLFGLIGMEMSAVHAEEVKNPQRDYPKALFYSALLIISTLSLGSLAIVIVVPNDSLSVVSGLVDAYAIFFNSYNMPWMTSVIAVLIILGGLSGVSAWIIGPTKGLLVSARDGSLPALFSRVNKYGSPVAILLTQGVIFTVLSTVFILLDSINAAYWVLSDLSAQMALLVYIMMFAAAIKLRYSKPEQPRGYTIPGGNLVMSLISGIGIICCIAAMIVGFIPPSQIPIKNVFLFECFLIGGLILFVFIPWLFAKKHDEQLCSEE.

The next 12 membrane-spanning stretches (helical) occupy residues 7-27, 37-57, 94-114, 121-141, 153-173, 196-216, 231-251, 282-302, 329-349, 359-379, 401-421, and 432-452; these read VLNV…LRTL, LVFY…LVAA, VVWY…LIAP, FYLL…NCFG, ASIG…VWIF, LSLF…AVHA, FYSA…IVIV, VIAV…IIGP, VAIL…FILL, LSDL…AAAI, MSLI…VGFI, and FLFE…PWLF.

The protein belongs to the amino acid-polyamine-organocation (APC) superfamily.

The protein localises to the cell membrane. This is an uncharacterized protein from Legionella pneumophila subsp. pneumophila (strain Philadelphia 1 / ATCC 33152 / DSM 7513).